The following is a 417-amino-acid chain: MLEQMGIAAKQASYKLAQLSSREKNRVLEKIADELEAQSESILNANAQDVADARANGLSDAMLDRLALTPARLKGIADDVRQVCNLADPVGQVIDGGVLDSGLRLERRRVPLGVIGVIYEARPNVTVDVASLCLKTGNAVILRGGKETCRTNAATVAVIQDALNSCGLPAGAVQAIDNPDRALVSELLRMDKYIDMLIPRGGAGLHKLCREQSTIPVITGGIGVCHIYVDESAEIAEALKVIVNAKTQRPSTCNTVETLLVNKNIADSFLPALSKQMAESGVTLHADAGALAQLQTGPAKVVAVKAEEYDDEFLSLDLNVKIVSDLDDAIAHIREHGTQHSDAILTRDMRNAQRFVNEVDSSAVYVNASTRFTDGGQFGLGAEVAVSTQKLHARGPMGLEALTTYKWIGIGDYTIRA.

The protein belongs to the gamma-glutamyl phosphate reductase family.

Its subcellular location is the cytoplasm. The catalysed reaction is L-glutamate 5-semialdehyde + phosphate + NADP(+) = L-glutamyl 5-phosphate + NADPH + H(+). It participates in amino-acid biosynthesis; L-proline biosynthesis; L-glutamate 5-semialdehyde from L-glutamate: step 2/2. In terms of biological role, catalyzes the NADPH-dependent reduction of L-glutamate 5-phosphate into L-glutamate 5-semialdehyde and phosphate. The product spontaneously undergoes cyclization to form 1-pyrroline-5-carboxylate. The protein is Gamma-glutamyl phosphate reductase of Escherichia fergusonii (strain ATCC 35469 / DSM 13698 / CCUG 18766 / IAM 14443 / JCM 21226 / LMG 7866 / NBRC 102419 / NCTC 12128 / CDC 0568-73).